The chain runs to 204 residues: Ribonuclease HII (204 aa).

The RNase H type-2 domain occupies 8-197 (RLICGVDEAG…VRELLQNPPL (190 aa)). A divalent metal cation is bound by residues D14, E15, and D106.

The protein belongs to the RNase HII family. Mn(2+) is required as a cofactor. Requires Mg(2+) as cofactor.

The protein resides in the cytoplasm. The enzyme catalyses Endonucleolytic cleavage to 5'-phosphomonoester.. In terms of biological role, endonuclease that specifically degrades the RNA of RNA-DNA hybrids. This chain is Ribonuclease HII, found in Azoarcus sp. (strain BH72).